Reading from the N-terminus, the 436-residue chain is MDVADPQPLGLFPEGELMSVGMDTFIHRIDSTEVIYQPRRKRAKLIGKYLMGDLLGEGSYGKVKEVLDSETLCRRAVKILKKKKLRRIPNGEANVKKEIQLLRRLRHRNVIQLVDVLYNEEKQKMYMVMEYCVCGMQEMLDSVPEKRFPVCQAHGYFRQLIDGLEYLHSQGIVHKDIKPGNLLLTTNGTLKISDLGVAEALHPFAVDDTCRTSQGSPAFQPPEIANGLDTFSGFKVDIWSAGVTLYNITTGLYPFEGDNIYKLFENIGRGDFTIPCDCAPPLSDLLRGMLEYEPAKRFSIRQIRQHSWFRKKHPLAEALVPIPPSPDTKDRWRSMTVVPYLEDLHGRAEEEEDEDLFDIEDGIIYTQDFTVPGQVLEEEVGQNGQSHSLPKAVCVNGTEPQLSSKVKPEGRPGAANPARKVCSSNKIRRLSACKQQ.

S31 carries the post-translational modification Phosphoserine. Residues K44 and K48 each carry the N6-acetyllysine modification. Residues 45–90 (LIGKYLMGDLLGEGSYGKVKEVLDSETLCRRAVKILKKKKLRRIPN) form a sufficient for interaction with SIRT1 region. Positions 49–309 (YLMGDLLGEG…IRQIRQHSWF (261 aa)) constitute a Protein kinase domain. Residues 55 to 63 (LGEGSYGKV) and K78 each bind ATP. 2 positions are modified to N6-acetyllysine: K96 and K97. The active-site Proton acceptor is the D176. T189 carries the phosphothreonine; by autocatalysis modification. N6-acetyllysine is present on residues K296 and K311. S325 is subject to Phosphoserine. Residue T336 is modified to Phosphothreonine; by autocatalysis. T366 is subject to Phosphothreonine; by ATM and autocatalysis. The tract at residues 397 to 421 (GTEPQLSSKVKPEGRPGAANPARKV) is disordered. Residue S403 is modified to Phosphoserine. At K420 the chain carries N6-acetyllysine. Residue C422 is the site of S-palmitoyl cysteine attachment. K426 carries the post-translational modification N6-acetyllysine. S431 carries the post-translational modification Phosphoserine; by autocatalysis, PKA, PKC/PRKCZ and RPS6KA1. Residue C433 is modified to Cysteine methyl ester. The S-farnesyl cysteine moiety is linked to residue C433. The residue at position 434 (K434) is an N6-acetyllysine. A propeptide spans 434 to 436 (KQQ) (removed in mature form).

This sequence belongs to the protein kinase superfamily. CAMK Ser/Thr protein kinase family. LKB1 subfamily. Catalytic component of a trimeric complex composed of STK11/LKB1, STRAD (STRADA or STRADB) and CAB39/MO25 (CAB39/MO25alpha or CAB39L/MO25beta): the complex tethers STK11/LKB1 in the cytoplasm and stimulates its catalytic activity. Found in a ternary complex composed of SMAD4, STK11/LKB1 and STK11IP. Interacts with NR4A1, p53/TP53, SMAD4, STK11IP and WDR6. Interacts with NISCH; this interaction may increase STK11 activity. Interacts with SIRT1; the interaction deacetylates STK11. Interacts with CDKN1A. Mg(2+) serves as cofactor. The cofactor is Mn(2+). Post-translationally, phosphorylated by ATM at Thr-366 following ionizing radiation (IR). Phosphorylation at Ser-431 by RPS6KA1 and/or some PKA is required to inhibit cell growth. Phosphorylation at Ser-431 is also required during neuronal polarization to mediate phosphorylation of BRSK1 and BRSK2. Phosphorylation by PKC/PRKCZ at Ser-397 in isoform 2 promotes metformin (or peroxynitrite)-induced nuclear export of STK11 and activation of AMPK. UV radiation -induced phosphorylation at Thr-366 mediates CDKN1A degradation. In terms of processing, acetylated. Deacetylation at Lys-48 enhances cytoplasmic localization and kinase activity in vitro. Expressed in brain, heart, testis, skeletal muscle and spleen, and weakly in liver and kidney. Isoform 1 is expressed at highest levels in the brain. Isoform 2 is expressed at highest levels in the testis, primarily in postmitotic developing germ cells (at protein level).

The protein localises to the nucleus. It is found in the cytoplasm. Its subcellular location is the membrane. It localises to the mitochondrion. The enzyme catalyses L-seryl-[protein] + ATP = O-phospho-L-seryl-[protein] + ADP + H(+). The catalysed reaction is L-threonyl-[protein] + ATP = O-phospho-L-threonyl-[protein] + ADP + H(+). Its activity is regulated as follows. Activated by forming a complex with STRAD (STRADA or STRADB) and CAB39/MO25 (CAB39/MO25alpha or CAB39L/MO25beta): STRADA (or STRADB)-binding promotes a conformational change of STK11/LKB1 in an active conformation, which is stabilized by CAB39/MO25alpha (or CAB39L/MO25beta) interacting with the STK11/LKB1 activation loop. Sequestration in the nucleus by NR4A1 prevents it from phosphorylating and activating cytoplasmic AMPK. Tumor suppressor serine/threonine-protein kinase that controls the activity of AMP-activated protein kinase (AMPK) family members, thereby playing a role in various processes such as cell metabolism, cell polarity, apoptosis and DNA damage response. Acts by phosphorylating the T-loop of AMPK family proteins, thus promoting their activity: phosphorylates PRKAA1, PRKAA2, BRSK1, BRSK2, MARK1, MARK2, MARK3, MARK4, NUAK1, NUAK2, SIK1, SIK2, SIK3 and SNRK but not MELK. Also phosphorylates non-AMPK family proteins such as STRADA, PTEN and possibly p53/TP53. Acts as a key upstream regulator of AMPK by mediating phosphorylation and activation of AMPK catalytic subunits PRKAA1 and PRKAA2 and thereby regulates processes including: inhibition of signaling pathways that promote cell growth and proliferation when energy levels are low, glucose homeostasis in liver, activation of autophagy when cells undergo nutrient deprivation, and B-cell differentiation in the germinal center in response to DNA damage. Also acts as a regulator of cellular polarity by remodeling the actin cytoskeleton. Required for cortical neuron polarization by mediating phosphorylation and activation of BRSK1 and BRSK2, leading to axon initiation and specification. Involved in DNA damage response: interacts with p53/TP53 and recruited to the CDKN1A/WAF1 promoter to participate in transcription activation. Able to phosphorylate p53/TP53; the relevance of such result in vivo is however unclear and phosphorylation may be indirect and mediated by downstream STK11/LKB1 kinase NUAK1. Also acts as a mediator of p53/TP53-dependent apoptosis via interaction with p53/TP53: translocates to the mitochondrion during apoptosis and regulates p53/TP53-dependent apoptosis pathways. Regulates UV radiation-induced DNA damage response mediated by CDKN1A. In association with NUAK1, phosphorylates CDKN1A in response to UV radiation and contributes to its degradation which is necessary for optimal DNA repair. In terms of biological role, has a role in spermiogenesis. This Rattus norvegicus (Rat) protein is Serine/threonine-protein kinase STK11.